Reading from the N-terminus, the 282-residue chain is Nucleotide-binding protein Ping_2894 (282 aa).

Residue 8–15 (GRSGSGKT) participates in ATP binding. 56 to 59 (DIRN) is a binding site for GTP.

The protein belongs to the RapZ-like family.

Its function is as follows. Displays ATPase and GTPase activities. In Psychromonas ingrahamii (strain DSM 17664 / CCUG 51855 / 37), this protein is Nucleotide-binding protein Ping_2894.